Consider the following 141-residue polypeptide: Nucleoside diphosphate kinase (141 aa).

Residues K11, F59, R87, T93, R104, and N114 each contribute to the ATP site. H117 (pros-phosphohistidine intermediate) is an active-site residue.

The protein belongs to the NDK family. In terms of assembly, homotetramer. Mg(2+) is required as a cofactor.

Its subcellular location is the cytoplasm. The catalysed reaction is a 2'-deoxyribonucleoside 5'-diphosphate + ATP = a 2'-deoxyribonucleoside 5'-triphosphate + ADP. The enzyme catalyses a ribonucleoside 5'-diphosphate + ATP = a ribonucleoside 5'-triphosphate + ADP. Its function is as follows. Major role in the synthesis of nucleoside triphosphates other than ATP. The ATP gamma phosphate is transferred to the NDP beta phosphate via a ping-pong mechanism, using a phosphorylated active-site intermediate. This chain is Nucleoside diphosphate kinase, found in Burkholderia cenocepacia (strain HI2424).